The primary structure comprises 244 residues: Cell division protein ZapD (244 aa).

This sequence belongs to the ZapD family. Interacts with FtsZ.

The protein localises to the cytoplasm. In terms of biological role, cell division factor that enhances FtsZ-ring assembly. Directly interacts with FtsZ and promotes bundling of FtsZ protofilaments, with a reduction in FtsZ GTPase activity. This is Cell division protein ZapD from Shewanella baltica (strain OS223).